Here is a 691-residue protein sequence, read N- to C-terminus: MARKTPLHMVRNIGIAAHIDAGKTTTSERILFFTGISHKIGETHEGTATMDWMDQEKERGITITSAATTCFWRDHQINLIDTPGHVDFTIEVERSMRVLDGAVAVFCSVGGVQPQSETVWRQANKYHVPRIAFVNKMDRVGANFYNVEKQIKDRLKANPVPLQIPIGAEDNFKGVVDLIQMKALVWESDEPTNYVVKDIPADLQDKAKEYHDKLVEAVAETDEKLMEKFFDGVELSIDEIKKGIKTATLSLNIVPMLCGTAFKNKGVQPLLDAVVDYLPAPDEVPNIKGQYENGKEVSVESTDDGEFAALGFKIATDPFVGQLTFVRVYRGVLASGSYVYNAGKGKKERVGRILRMHSNKREEIKELYAGEIGAVVGLKDTLTGDTLASEKDPVILERMEFPDPVISVAVEPKTKADQEKMGIALQKLAQEDPSFRVATDEESGQTIISGMGELHLEIIVDRMLREFKVEAEVGKPQVAYRETIRKTVEQEYKYAKQSGGRGQYGHVFLRLEPMEPGGENYEFVNDIKGGAVPKEYIPAVDKGCQEAMQSGVLAGYPVVDIKVTLFDGSYHEVDSSEMAFKLAASMGFKEGARKANAVILEPMMKVEVETPEEYMGDVIGDLNKRRGQVNNMSDRGGNKIIDAFCPLAEMFGYSTDLRSQTQGRATYSMEFDHYDEVPRNVSEEIIKKRNG.

The region spanning 8–282 (HMVRNIGIAA…AVVDYLPAPD (275 aa)) is the tr-type G domain. Residues 17-24 (AHIDAGKT), 81-85 (DTPGH), and 135-138 (NKMD) each bind GTP.

Belongs to the TRAFAC class translation factor GTPase superfamily. Classic translation factor GTPase family. EF-G/EF-2 subfamily.

The protein resides in the cytoplasm. In terms of biological role, catalyzes the GTP-dependent ribosomal translocation step during translation elongation. During this step, the ribosome changes from the pre-translocational (PRE) to the post-translocational (POST) state as the newly formed A-site-bound peptidyl-tRNA and P-site-bound deacylated tRNA move to the P and E sites, respectively. Catalyzes the coordinated movement of the two tRNA molecules, the mRNA and conformational changes in the ribosome. This is Elongation factor G from Campylobacter hominis (strain ATCC BAA-381 / DSM 21671 / CCUG 45161 / LMG 19568 / NCTC 13146 / CH001A).